Here is a 405-residue protein sequence, read N- to C-terminus: S-adenosylmethionine synthase (405 aa).

Position 139–144 (139–144) interacts with ATP; sequence GQGSVD.

The protein belongs to the AdoMet synthase 2 family. Mg(2+) serves as cofactor.

The enzyme catalyses L-methionine + ATP + H2O = S-adenosyl-L-methionine + phosphate + diphosphate. Its pathway is amino-acid biosynthesis; S-adenosyl-L-methionine biosynthesis; S-adenosyl-L-methionine from L-methionine: step 1/1. Catalyzes the formation of S-adenosylmethionine from methionine and ATP. This chain is S-adenosylmethionine synthase, found in Thermococcus onnurineus (strain NA1).